The chain runs to 1392 residues: DNA-directed RNA polymerase subunit beta (1392 aa).

Belongs to the RNA polymerase beta chain family. As to quaternary structure, the RNAP catalytic core consists of 2 alpha, 1 beta, 1 beta' and 1 omega subunit. When a sigma factor is associated with the core the holoenzyme is formed, which can initiate transcription.

It carries out the reaction RNA(n) + a ribonucleoside 5'-triphosphate = RNA(n+1) + diphosphate. Functionally, DNA-dependent RNA polymerase catalyzes the transcription of DNA into RNA using the four ribonucleoside triphosphates as substrates. The polypeptide is DNA-directed RNA polymerase subunit beta (Neisseria gonorrhoeae (strain ATCC 700825 / FA 1090)).